The following is a 308-amino-acid chain: uncharacterized protein (308 aa).

One can recognise an ABC transporter domain in the interval 6–234 (LHIEGLDKKI…TEKAIIEVQP (229 aa)). 38–45 (GPNGSGKT) serves as a coordination point for ATP.

This sequence belongs to the ABC transporter superfamily.

This is an uncharacterized protein from Bacillus subtilis (strain 168).